The chain runs to 252 residues: Aspartate/glutamate leucyltransferase (252 aa).

Belongs to the R-transferase family. Bpt subfamily.

It localises to the cytoplasm. It carries out the reaction N-terminal L-glutamyl-[protein] + L-leucyl-tRNA(Leu) = N-terminal L-leucyl-L-glutamyl-[protein] + tRNA(Leu) + H(+). The enzyme catalyses N-terminal L-aspartyl-[protein] + L-leucyl-tRNA(Leu) = N-terminal L-leucyl-L-aspartyl-[protein] + tRNA(Leu) + H(+). Its function is as follows. Functions in the N-end rule pathway of protein degradation where it conjugates Leu from its aminoacyl-tRNA to the N-termini of proteins containing an N-terminal aspartate or glutamate. The polypeptide is Aspartate/glutamate leucyltransferase (Polynucleobacter necessarius subsp. necessarius (strain STIR1)).